Reading from the N-terminus, the 115-residue chain is Holo-[acyl-carrier-protein] synthase (115 aa).

Residues Asp6 and Glu51 each contribute to the Mg(2+) site.

This sequence belongs to the P-Pant transferase superfamily. AcpS family. Requires Mg(2+) as cofactor.

The protein resides in the cytoplasm. It catalyses the reaction apo-[ACP] + CoA = holo-[ACP] + adenosine 3',5'-bisphosphate + H(+). Functionally, transfers the 4'-phosphopantetheine moiety from coenzyme A to a Ser of acyl-carrier-protein. The sequence is that of Holo-[acyl-carrier-protein] synthase from Campylobacter jejuni subsp. jejuni serotype O:6 (strain 81116 / NCTC 11828).